Consider the following 1231-residue polypeptide: Complement factor H (1231 aa).

A signal peptide spans 1–18 (MRLLAKIICLMLWAICVA). 20 consecutive Sushi domains span residues 19-82 (EDCN…KCQK), 83-143 (RPCG…ICEV), 144-207 (VKCL…KCVE), 208-264 (ISCK…SCEE), 265-322 (KSCD…RCTL), 324-386 (PCDY…VPCL), 387-444 (RKCY…RCIR), 446-507 (KTCS…TCIK), 515-566 (MNAR…ICYE), 567-625 (RECE…ICKE), 628-686 (QSCG…VCIV), 689-746 (STCG…QCVA), 751-805 (KKCK…NCSM), 809-866 (QLCP…LCVE), 868-928 (IPCS…QCEG), 929-986 (LPCK…SCIK), 987-1045 (TDCL…TCRD), 1046-1104 (TSCV…QCKD), 1107-1165 (GKCG…KCLH), and 1170-1230 (SREI…TCAK). 40 cysteine pairs are disulfide-bonded: C21–C66, C52–C80, C85–C129, C114–C141, C146–C192, C178–C205, C210–C251, C237–C262, C267–C309, C294–C320, C325–C374, C357–C385, C389–C431, C416–C442, C448–C494, C477–C505, C509–C553, C536–C564, C569–C611, C597–C623, C630–C673, C659–C684, C691–C733, C719–C744, C753–C792, C781–C803, C811–C853, C839–C864, C870–C915, C901–C926, C931–C973, C959–C984, C989–C1032, C1018–C1043, C1048–C1091, C1077–C1102, C1109–C1152, C1138–C1163, C1167–C1218, and C1201–C1228. N-linked (GlcNAc...) (complex) asparagine glycosylation is present at N217. N-linked (GlcNAc...) asparagine glycosylation occurs at N529. N-linked (GlcNAc...) asparagine glycosylation occurs at N718. Residues N802 and N822 are each glycosylated (N-linked (GlcNAc...) asparagine). Residues N882 and N911 are each glycosylated (N-linked (GlcNAc...) (complex) asparagine). The N-linked (GlcNAc...) (complex) asparagine glycan is linked to N1029. N1095 carries an N-linked (GlcNAc...) asparagine glycan.

Homodimer. Also forms homooligomers. Interacts with complement protein C3b; this interaction inhibits complement activation. Interacts with complement protein C3d. Interacts with CR3/ITGAM; this interaction mediates adhesion of neutrophils to pathogens leading to pathogen clearance. Interacts with complement factor I. In terms of assembly, (Microbial infection) Interacts with West nile virus non-structural protein 1 (NS1); this interaction leads to the degradation of C3. As to quaternary structure, (Microbial infection) Interacts with C.albicans GPD2; the interaction is direct and leads to the degradation of C3 which enables the pathogen to evade the host innate immune system. (Microbial infection) Interacts with Neisseria meningitidis protein fHbp. In terms of assembly, (Microbial infection) Interacts with Borrelia burgdorferi outer surface protein E/OspE; this interaction recruits complement regulator factor H onto the bacterial surface to evade complement-mediated cell lysis. As to quaternary structure, (Microbial infection) Interacts with Streptococcus pneumoniae protein virulence factor choline-binding protein A/CbpAN; this interaction enables Streptococcus pneumoniae to evade surveillance by human complement system. (Microbial infection) Interacts with Staphylococcus aureus surface protein serine-aspartate repeat protein E/SdrE; this interaction sequesters CFH on the surface of S.aureus for complement evasion. In terms of assembly, (Microbial infection) Interacts with Staphylococcus aureus protein Sbi; this interaction inhibits the complement activation of the alternative pathway. As to quaternary structure, (Microbial infection) Interacts (via sushi 4-6 domains) with P.falciparum surface protein PF92; the interaction recruits CFH onto the merozoite surface preventing complement-mediated cell lysis. The interaction does not affect CFH activity. Interacts (via sushi 6-7 domains) with P.falciparum (strain NF54) GAP50; the interaction occurs in the vector mosquito midgut at the surface of the activated parasite gametocytes; the interaction protects the parasite from alternative complement pathway-mediated elimination. (Microbial infection) Interacts (via sushi 4-6 domains) with P.falciparum surface protein PF92; the interaction recruits FHL-1 isoform onto the merozoite surface preventing complement-mediated cell lysis. The interaction does not affect FHL-1 isoform activity. Interacts (via sushi 6-7 domains) with P.falciparum (strain NF54) GAP50; the interaction occurs in the vector mosquito midgut at the surface of the activated parasite gametocytes; the interaction protects the parasite from alternative complement pathway-mediated elimination. Sulfated on tyrosine residues. Post-translationally, according to a report, Asn-217 is not glycosylated. Another study observed glycosylation at this position. Expressed in the retinal pigment epithelium (at protein level). CFH is one of the most abundant complement components in blood where the liver is the major source of CFH protein in vivo. in addition, CFH is secreted by additional cell types including monocytes, fibroblasts, or endothelial cells.

The protein localises to the secreted. Glycoprotein that plays an essential role in maintaining a well-balanced immune response by modulating complement activation. Acts as a soluble inhibitor of complement, where its binding to self markers such as glycan structures prevents complement activation and amplification on cell surfaces. Accelerates the decay of the complement alternative pathway (AP) C3 convertase C3bBb, thus preventing local formation of more C3b, the central player of the complement amplification loop. As a cofactor of the serine protease factor I, CFH also regulates proteolytic degradation of already-deposited C3b. In addition, mediates several cellular responses through interaction with specific receptors. For example, interacts with CR3/ITGAM receptor and thereby mediates the adhesion of human neutrophils to different pathogens. In turn, these pathogens are phagocytosed and destroyed. In terms of biological role, (Microbial infection) In the mosquito midgut, binds to the surface of parasite P.falciparum gametocytes and protects the parasite from alternative complement pathway-mediated elimination. The polypeptide is Complement factor H (CFH) (Homo sapiens (Human)).